Here is a 167-residue protein sequence, read N- to C-terminus: Urease accessory protein UreE (167 aa).

It belongs to the UreE family.

The protein localises to the cytoplasm. Involved in urease metallocenter assembly. Binds nickel. Probably functions as a nickel donor during metallocenter assembly. The protein is Urease accessory protein UreE of Pseudomonas aeruginosa (strain UCBPP-PA14).